Consider the following 455-residue polypeptide: MALWGGRFQGETSALFKLFNDSLPVDYRLFEQDVVGSIAWADAIASVGIITATECSDLKKALNDLLVEVNGDPAIILASGAEDIHSFVESALIAKVGDLGKKLHTGRSRNDQVATDLKLWCQSEGAALLARLHSLHAELLALAEREFDAVMPGYTHLQRAQPVTFGHWCLAYVEMYERDISRLADALTRANTCPLGSGALAGTAYKMDRHALAAALNFASPTLNSLDSVSDRDHVVELCSTASISMMHLSRMAEDLIFFNSGEANFISLSDEVTSGSSLMPQKKNPDALELIRGKTGRVYGSLVGILTTMKALPLAYNKDMQEDKEGLFDVVDSWAICLDMAALVLSGLKVNRPNALLAAQQGYANSTELADYLVSKGMPFREAHHVVGEVVVAAIAKQIPLEEFSLAELKTFAAIIEDDVYPNLTIEACLAKRDVLGGTALPQIQQAIAAKKAR.

This sequence belongs to the lyase 1 family. Argininosuccinate lyase subfamily.

The protein resides in the cytoplasm. It carries out the reaction 2-(N(omega)-L-arginino)succinate = fumarate + L-arginine. It functions in the pathway amino-acid biosynthesis; L-arginine biosynthesis; L-arginine from L-ornithine and carbamoyl phosphate: step 3/3. The sequence is that of Argininosuccinate lyase from Shewanella baltica (strain OS195).